The following is a 584-amino-acid chain: Proline--tRNA ligase (584 aa).

It belongs to the class-II aminoacyl-tRNA synthetase family. ProS type 1 subfamily. Homodimer.

It localises to the cytoplasm. It catalyses the reaction tRNA(Pro) + L-proline + ATP = L-prolyl-tRNA(Pro) + AMP + diphosphate. Functionally, catalyzes the attachment of proline to tRNA(Pro) in a two-step reaction: proline is first activated by ATP to form Pro-AMP and then transferred to the acceptor end of tRNA(Pro). As ProRS can inadvertently accommodate and process non-cognate amino acids such as alanine and cysteine, to avoid such errors it has two additional distinct editing activities against alanine. One activity is designated as 'pretransfer' editing and involves the tRNA(Pro)-independent hydrolysis of activated Ala-AMP. The other activity is designated 'posttransfer' editing and involves deacylation of mischarged Ala-tRNA(Pro). The misacylated Cys-tRNA(Pro) is not edited by ProRS. The protein is Proline--tRNA ligase of Mycobacterium sp. (strain KMS).